A 136-amino-acid polypeptide reads, in one-letter code: Large ribosomal subunit protein uL16c (136 aa).

The interval 1-20 (MLSPKRTRFRKQHRGRMKGK) is disordered.

It belongs to the universal ribosomal protein uL16 family. As to quaternary structure, part of the 50S ribosomal subunit.

The protein resides in the plastid. The protein localises to the chloroplast. The polypeptide is Large ribosomal subunit protein uL16c (Lolium perenne (Perennial ryegrass)).